A 380-amino-acid polypeptide reads, in one-letter code: Carbamoyl phosphate synthase small chain (380 aa).

Positions 1 to 187 (MTTSTRGAAK…VVPAIGAKRF (187 aa)) are CPSase. Residues serine 55, glycine 236, and glycine 238 each coordinate L-glutamine. Positions 188-380 (TVAAVDLGIK…FVSLMEGQRA (193 aa)) constitute a Glutamine amidotransferase type-1 domain. Cysteine 264 acts as the Nucleophile in catalysis. Phenylalanine 265, glutamine 268, asparagine 306, glycine 308, and phenylalanine 309 together coordinate L-glutamine. Catalysis depends on residues histidine 354 and glutamate 356.

The protein belongs to the CarA family. In terms of assembly, composed of two chains; the small (or glutamine) chain promotes the hydrolysis of glutamine to ammonia, which is used by the large (or ammonia) chain to synthesize carbamoyl phosphate. Tetramer of heterodimers (alpha,beta)4.

It catalyses the reaction hydrogencarbonate + L-glutamine + 2 ATP + H2O = carbamoyl phosphate + L-glutamate + 2 ADP + phosphate + 2 H(+). The catalysed reaction is L-glutamine + H2O = L-glutamate + NH4(+). The protein operates within amino-acid biosynthesis; L-arginine biosynthesis; carbamoyl phosphate from bicarbonate: step 1/1. It functions in the pathway pyrimidine metabolism; UMP biosynthesis via de novo pathway; (S)-dihydroorotate from bicarbonate: step 1/3. In terms of biological role, small subunit of the glutamine-dependent carbamoyl phosphate synthetase (CPSase). CPSase catalyzes the formation of carbamoyl phosphate from the ammonia moiety of glutamine, carbonate, and phosphate donated by ATP, constituting the first step of 2 biosynthetic pathways, one leading to arginine and/or urea and the other to pyrimidine nucleotides. The small subunit (glutamine amidotransferase) binds and cleaves glutamine to supply the large subunit with the substrate ammonia. The sequence is that of Carbamoyl phosphate synthase small chain from Streptomyces avermitilis (strain ATCC 31267 / DSM 46492 / JCM 5070 / NBRC 14893 / NCIMB 12804 / NRRL 8165 / MA-4680).